We begin with the raw amino-acid sequence, 126 residues long: Large ribosomal subunit protein bL12 (126 aa).

It belongs to the bacterial ribosomal protein bL12 family. As to quaternary structure, homodimer. Part of the ribosomal stalk of the 50S ribosomal subunit. Forms a multimeric L10(L12)X complex, where L10 forms an elongated spine to which 2 to 4 L12 dimers bind in a sequential fashion. Binds GTP-bound translation factors.

Its function is as follows. Forms part of the ribosomal stalk which helps the ribosome interact with GTP-bound translation factors. Is thus essential for accurate translation. This is Large ribosomal subunit protein bL12 from Solibacter usitatus (strain Ellin6076).